The chain runs to 341 residues: NADH-quinone oxidoreductase subunit H 1 (341 aa).

Transmembrane regions (helical) follow at residues 13-33, 82-102, 115-135, 161-181, 190-210, 248-268, 277-297, and 317-337; these read LVVI…IAYI, GVFL…WAVI, VGVL…IMAG, IGFV…TAIV, LLGW…VSAL, YVAI…GWLP, WVPG…LFAM, and VFLP…QFAG.

The protein belongs to the complex I subunit 1 family. In terms of assembly, NDH-1 is composed of 14 different subunits. Subunits NuoA, H, J, K, L, M, N constitute the membrane sector of the complex.

Its subcellular location is the cell inner membrane. It catalyses the reaction a quinone + NADH + 5 H(+)(in) = a quinol + NAD(+) + 4 H(+)(out). Functionally, NDH-1 shuttles electrons from NADH, via FMN and iron-sulfur (Fe-S) centers, to quinones in the respiratory chain. The immediate electron acceptor for the enzyme in this species is believed to be ubiquinone. Couples the redox reaction to proton translocation (for every two electrons transferred, four hydrogen ions are translocated across the cytoplasmic membrane), and thus conserves the redox energy in a proton gradient. This subunit may bind ubiquinone. This chain is NADH-quinone oxidoreductase subunit H 1, found in Rhodopseudomonas palustris (strain BisB18).